The primary structure comprises 617 residues: Electron transfer flavoprotein-ubiquinone oxidoreductase, mitochondrial (617 aa).

The transit peptide at 1–33 (MLVPLAKLSCPAYQCFHALKIKKNYLPLCATRW) directs the protein to the mitochondrion. 71–85 (VVIVGAGPAGLSAAV) serves as a coordination point for FAD. Lys-96 bears the N6-acetyllysine mark. The stretch at 109–130 (IGAHTLSGACLDPGAFKELFPD) is an intramembrane region. An N6-acetyllysine mark is found at Lys-132 and Lys-223. A ubiquinone is bound by residues Gly-305 and Gly-306. Lys-357 carries the N6-acetyllysine modification. Residues 428 to 447 (MGLHVTEYEDNLKNSWVWKE) lie within the membrane without spanning it. The residue at position 551 (Ser-551) is a Phosphoserine. Residues Cys-561, Cys-586, Cys-589, and Cys-592 each contribute to the [4Fe-4S] cluster site. Residues 577-606 (FRLQINAQNCVHCKTCDIKDPSQNINWVVP) enclose the 4Fe-4S ferredoxin-type domain.

This sequence belongs to the ETF-QO/FixC family. Monomer. [4Fe-4S] cluster is required as a cofactor. The cofactor is FAD.

It is found in the mitochondrion inner membrane. The catalysed reaction is a ubiquinone + reduced [electron-transfer flavoprotein] = a ubiquinol + oxidized [electron-transfer flavoprotein] + H(+). Its function is as follows. Accepts electrons from ETF and reduces ubiquinone. This Pongo abelii (Sumatran orangutan) protein is Electron transfer flavoprotein-ubiquinone oxidoreductase, mitochondrial (ETFDH).